Consider the following 346-residue polypeptide: tRNA N6-adenosine threonylcarbamoyltransferase (346 aa).

2 residues coordinate Fe cation: His-111 and His-115. Substrate is bound by residues Leu-134–Gly-138, Asp-167, Gly-180, and Asn-279. Residue Asp-307 coordinates Fe cation.

The protein belongs to the KAE1 / TsaD family. Fe(2+) is required as a cofactor.

Its subcellular location is the cytoplasm. The enzyme catalyses L-threonylcarbamoyladenylate + adenosine(37) in tRNA = N(6)-L-threonylcarbamoyladenosine(37) in tRNA + AMP + H(+). Required for the formation of a threonylcarbamoyl group on adenosine at position 37 (t(6)A37) in tRNAs that read codons beginning with adenine. Is involved in the transfer of the threonylcarbamoyl moiety of threonylcarbamoyl-AMP (TC-AMP) to the N6 group of A37, together with TsaE and TsaB. TsaD likely plays a direct catalytic role in this reaction. This chain is tRNA N6-adenosine threonylcarbamoyltransferase, found in Burkholderia cenocepacia (strain ATCC BAA-245 / DSM 16553 / LMG 16656 / NCTC 13227 / J2315 / CF5610) (Burkholderia cepacia (strain J2315)).